A 389-amino-acid polypeptide reads, in one-letter code: GTPase Obg (389 aa).

The Obg domain maps to M1 to L159. In terms of domain architecture, OBG-type G spans A160–K333. GTP contacts are provided by residues G166–S173, F191–V195, D213–G216, N283–D286, and A314–I316. 2 residues coordinate Mg(2+): S173 and T193. The interval Q362–R389 is disordered. Over residues E364–V383 the composition is skewed to acidic residues.

Belongs to the TRAFAC class OBG-HflX-like GTPase superfamily. OBG GTPase family. As to quaternary structure, monomer. Mg(2+) is required as a cofactor.

The protein localises to the cytoplasm. Functionally, an essential GTPase which binds GTP, GDP and possibly (p)ppGpp with moderate affinity, with high nucleotide exchange rates and a fairly low GTP hydrolysis rate. Plays a role in control of the cell cycle, stress response, ribosome biogenesis and in those bacteria that undergo differentiation, in morphogenesis control. In Proteus mirabilis (strain HI4320), this protein is GTPase Obg.